A 454-amino-acid chain; its full sequence is CCA-adding enzyme (454 aa).

Residues Ser59 and Arg62 each coordinate ATP. CTP contacts are provided by Ser59 and Arg62. Mg(2+) contacts are provided by Asp71, Asp73, and Asp125. His148, Lys167, and Tyr176 together coordinate ATP. The CTP site is built by His148, Lys167, and Tyr176.

The protein belongs to the tRNA nucleotidyltransferase/poly(A) polymerase family. Archaeal CCA-adding enzyme subfamily. As to quaternary structure, homodimer. The cofactor is Mg(2+).

The enzyme catalyses a tRNA precursor + 2 CTP + ATP = a tRNA with a 3' CCA end + 3 diphosphate. The catalysed reaction is a tRNA with a 3' CCA end + 2 CTP + ATP = a tRNA with a 3' CCACCA end + 3 diphosphate. Its function is as follows. Catalyzes the addition and repair of the essential 3'-terminal CCA sequence in tRNAs without using a nucleic acid template. Adds these three nucleotides in the order of C, C, and A to the tRNA nucleotide-73, using CTP and ATP as substrates and producing inorganic pyrophosphate. tRNA 3'-terminal CCA addition is required both for tRNA processing and repair. Also involved in tRNA surveillance by mediating tandem CCA addition to generate a CCACCA at the 3' terminus of unstable tRNAs. While stable tRNAs receive only 3'-terminal CCA, unstable tRNAs are marked with CCACCA and rapidly degraded. The polypeptide is CCA-adding enzyme (Methanosarcina barkeri (strain Fusaro / DSM 804)).